The primary structure comprises 381 residues: Lipid-A-disaccharide synthase (381 aa).

It belongs to the LpxB family.

It catalyses the reaction a lipid X + a UDP-2-N,3-O-bis[(3R)-3-hydroxyacyl]-alpha-D-glucosamine = a lipid A disaccharide + UDP + H(+). The protein operates within bacterial outer membrane biogenesis; LPS lipid A biosynthesis. Condensation of UDP-2,3-diacylglucosamine and 2,3-diacylglucosamine-1-phosphate to form lipid A disaccharide, a precursor of lipid A, a phosphorylated glycolipid that anchors the lipopolysaccharide to the outer membrane of the cell. In Rickettsia bellii (strain OSU 85-389), this protein is Lipid-A-disaccharide synthase.